Consider the following 444-residue polypeptide: Endothelin-3 receptor (444 aa).

The signal sequence occupies residues 1–18; that stretch reads MATVILFVAWMACLMVGV. At 19-88 the chain is on the extracellular side; the sequence is CYQEFQTQQN…SRAKIRHAFK (70 aa). Asparagine 60 carries an N-linked (GlcNAc...) asparagine glycan. Residues 89–113 form a helical membrane-spanning segment; that stretch reads YVTTILSCVIFLVGIVGNSTLLRII. Residues 114–124 are Cytoplasmic-facing; it reads YKNKCMRNGPN. The helical transmembrane segment at 125 to 145 threads the bilayer; sequence VLIASLALGDLFYILIAIPII. Residues 146–161 lie on the Extracellular side of the membrane; that stretch reads SISFWLSTGHSEYIYQ. A helical transmembrane segment spans residues 162-180; it reads LVHLYRARVYSLSLCALSI. Over 181–201 the chain is Cytoplasmic; the sequence is DRYRAVASWNRIRSIGIPVRK. The helical transmembrane segment at 202–226 threads the bilayer; it reads AIELTLIWAVAIIVAVPEAIAFNLV. The Extracellular segment spans residues 227-254; that stretch reads ELDFRGQTILVCMLPMEQTSDFMRFYQE. Residues 255-279 form a helical membrane-spanning segment; sequence VKVWWLFGFYFCLPLACTGVFYTLM. Topologically, residues 280 to 307 are cytoplasmic; the sequence is SCEMLSIKNGMRIALNDHMKQRREVAKT. A helical transmembrane segment spans residues 308–328; sequence VFCLVVIFALCWLPLHVSSIF. The Extracellular segment spans residues 329–365; that stretch reads VRLSATVKRACILKNKRSCIMAEIQTGVNYQLLMVMN. Residues 366–386 form a helical membrane-spanning segment; that stretch reads YTGINMASLNSCIGPVALYFV. The Cytoplasmic segment spans residues 387–444; the sequence is SRKFKNCFQSCLCCWCHRPTLTITPMDEKGSGGKWKANGHDLDLDRSSSRLSNKYSSS. Residues 416–444 are disordered; it reads GSGGKWKANGHDLDLDRSSSRLSNKYSSS. Residues 424–434 are compositionally biased toward basic and acidic residues; the sequence is NGHDLDLDRSS. Positions 435–444 are enriched in low complexity; the sequence is SRLSNKYSSS.

It belongs to the G-protein coupled receptor 1 family. Endothelin receptor subfamily.

The protein localises to the cell membrane. Its function is as follows. Receptor for endothelin-3. Mediates its action by association with G proteins that activate a phosphatidylinositol-calcium second messenger system. This Xenopus laevis (African clawed frog) protein is Endothelin-3 receptor.